A 351-amino-acid chain; its full sequence is Histidinol-phosphate aminotransferase (351 aa).

At Lys209 the chain carries N6-(pyridoxal phosphate)lysine.

It belongs to the class-II pyridoxal-phosphate-dependent aminotransferase family. Histidinol-phosphate aminotransferase subfamily. Homodimer. Pyridoxal 5'-phosphate serves as cofactor.

The enzyme catalyses L-histidinol phosphate + 2-oxoglutarate = 3-(imidazol-4-yl)-2-oxopropyl phosphate + L-glutamate. The protein operates within amino-acid biosynthesis; L-histidine biosynthesis; L-histidine from 5-phospho-alpha-D-ribose 1-diphosphate: step 7/9. In Chromohalobacter salexigens (strain ATCC BAA-138 / DSM 3043 / CIP 106854 / NCIMB 13768 / 1H11), this protein is Histidinol-phosphate aminotransferase.